A 280-amino-acid chain; its full sequence is Phosphatidylserine decarboxylase proenzyme (280 aa).

Active-site charge relay system; for autoendoproteolytic cleavage activity residues include D90, H146, and S247. The Schiff-base intermediate with substrate; via pyruvic acid; for decarboxylase activity role is filled by S247. Position 247 is a pyruvic acid (Ser); by autocatalysis (S247).

The protein belongs to the phosphatidylserine decarboxylase family. PSD-B subfamily. Prokaryotic type I sub-subfamily. Heterodimer of a large membrane-associated beta subunit and a small pyruvoyl-containing alpha subunit. It depends on pyruvate as a cofactor. Is synthesized initially as an inactive proenzyme. Formation of the active enzyme involves a self-maturation process in which the active site pyruvoyl group is generated from an internal serine residue via an autocatalytic post-translational modification. Two non-identical subunits are generated from the proenzyme in this reaction, and the pyruvate is formed at the N-terminus of the alpha chain, which is derived from the carboxyl end of the proenzyme. The autoendoproteolytic cleavage occurs by a canonical serine protease mechanism, in which the side chain hydroxyl group of the serine supplies its oxygen atom to form the C-terminus of the beta chain, while the remainder of the serine residue undergoes an oxidative deamination to produce ammonia and the pyruvoyl prosthetic group on the alpha chain. During this reaction, the Ser that is part of the protease active site of the proenzyme becomes the pyruvoyl prosthetic group, which constitutes an essential element of the active site of the mature decarboxylase.

It is found in the cell membrane. The enzyme catalyses a 1,2-diacyl-sn-glycero-3-phospho-L-serine + H(+) = a 1,2-diacyl-sn-glycero-3-phosphoethanolamine + CO2. It functions in the pathway phospholipid metabolism; phosphatidylethanolamine biosynthesis; phosphatidylethanolamine from CDP-diacylglycerol: step 2/2. Functionally, catalyzes the formation of phosphatidylethanolamine (PtdEtn) from phosphatidylserine (PtdSer). This is Phosphatidylserine decarboxylase proenzyme from Myxococcus xanthus (strain DK1622).